Here is a 492-residue protein sequence, read N- to C-terminus: RNase aCSPSF2 (492 aa).

His130, His132, Asp134, His135, His213, Asp234, and His460 together coordinate a divalent metal cation.

Belongs to the metallo-beta-lactamase superfamily. RNA-metabolizing metallo-beta-lactamase-like family. Mg(2+) serves as cofactor.

In terms of biological role, a 5'-3' exoribonuclease, more active on 5'-monophosphorylated and 5'-hydroxylated RNA than 5'-tri-phosphorylated RNA; note there is no evidence for accumulation of 5'-monophosphorylated RNA in this organism. Translation initiation factor 2 subunit gamma but not subunit alpha protects 5'-tri-phosphorylated RNA from degradation by this enzyme. The sequence is that of RNase aCSPSF2 from Saccharolobus solfataricus (strain ATCC 35092 / DSM 1617 / JCM 11322 / P2) (Sulfolobus solfataricus).